The primary structure comprises 379 residues: Cobalt-precorrin-5B C(1)-methyltransferase (379 aa).

This sequence belongs to the CbiD family.

It carries out the reaction Co-precorrin-5B + S-adenosyl-L-methionine = Co-precorrin-6A + S-adenosyl-L-homocysteine. The protein operates within cofactor biosynthesis; adenosylcobalamin biosynthesis; cob(II)yrinate a,c-diamide from sirohydrochlorin (anaerobic route): step 6/10. Its function is as follows. Catalyzes the methylation of C-1 in cobalt-precorrin-5B to form cobalt-precorrin-6A. In Salmonella dublin (strain CT_02021853), this protein is Cobalt-precorrin-5B C(1)-methyltransferase.